A 329-amino-acid chain; its full sequence is GTP 3',8-cyclase (329 aa).

One can recognise a Radical SAM core domain in the interval 8–234; that stretch reads AFARKFYYLR…QLRQRSDGPA (227 aa). Arg17 is a GTP binding site. 2 residues coordinate [4Fe-4S] cluster: Cys24 and Cys28. S-adenosyl-L-methionine is bound at residue Tyr30. [4Fe-4S] cluster is bound at residue Cys31. Residue Arg68 coordinates GTP. Residue Gly72 participates in S-adenosyl-L-methionine binding. Residue Thr99 participates in GTP binding. Position 123 (Ser123) interacts with S-adenosyl-L-methionine. Lys160 lines the GTP pocket. Met194 contacts S-adenosyl-L-methionine. 2 residues coordinate [4Fe-4S] cluster: Cys257 and Cys260. 262–264 contacts GTP; sequence RLR. Residue Cys274 participates in [4Fe-4S] cluster binding.

The protein belongs to the radical SAM superfamily. MoaA family. In terms of assembly, monomer and homodimer. [4Fe-4S] cluster serves as cofactor.

It carries out the reaction GTP + AH2 + S-adenosyl-L-methionine = (8S)-3',8-cyclo-7,8-dihydroguanosine 5'-triphosphate + 5'-deoxyadenosine + L-methionine + A + H(+). It participates in cofactor biosynthesis; molybdopterin biosynthesis. Its function is as follows. Catalyzes the cyclization of GTP to (8S)-3',8-cyclo-7,8-dihydroguanosine 5'-triphosphate. The sequence is that of GTP 3',8-cyclase from Escherichia coli O45:K1 (strain S88 / ExPEC).